Here is a 734-residue protein sequence, read N- to C-terminus: MGASNLLRFGAVTRISTPLLSRRSLATHAAVNPASGTYNLVEKIVQKYAVDLSPGSHVKSGDYVSIRPGTVMTHDNTGPVISKFGSIGATSIYNPDQVVFALDHDVQNKSAKNLEKYSKIESFARKHGIDFYPAGRGIGHQVLVEEGYAFPQTLAVASDSHSNMYGGVGCLGTPIVRTDAAAIWATGQTWWQIPEVVKVELKGELPKGVTGKDVIVALCGYFNKDQVLNAAIEFHGSGLSSLSVEERLAIANMTTEWGALAGLFPTDDVTLSWYEKQIRKRDKLEFQIGSSPSPSNSHPRLNMNRLDELSRTLLRPDSGAVYSKHLTLDLATLVPHVSGPNSVKVSTPLDELTSQNIAINKAYLVSCVNSRASDLKAAADVIRGKKVAPGVEFYVAAASSVVQREAEEAGDWGALMAAGAKPLPAGCGPCIGLGVGLLEDGEVGISATNRNYKGRMGSPNAQAYLASPAVVAASAIEGKICGPSDLDVSLLPPSKGLKYSISTAANAAPADASSTDASAGGVEILDSFPTAFSGPLIFAPQDNLNTDGIYPGKYTYQDDITPEKQAEVVMENYDASFASTVAGLRASSSSSSSTKQGPILIGGYNFGTGSSREQAATALKYAGIPLVLAGSFGDIFQRNAINNGLICLESHQLVQDLTRLYLENEGGVRNSKAILLDESKVHIDSSTGSINLSFKGPDGAKIERTYTAKPAGIGRSVQEIYTAGGLEKWVKQRI.

A mitochondrion-targeting transit peptide spans 1–25 (MGASNLLRFGAVTRISTPLLSRRSL). Residues cysteine 367, cysteine 427, and cysteine 430 each coordinate [4Fe-4S] cluster.

This sequence belongs to the aconitase/IPM isomerase family. The cofactor is [4Fe-4S] cluster.

The protein resides in the mitochondrion. The enzyme catalyses (2R,3S)-homoisocitrate = cis-homoaconitate + H2O. The protein operates within amino-acid biosynthesis; L-lysine biosynthesis via AAA pathway; L-alpha-aminoadipate from 2-oxoglutarate: step 3/5. Functionally, catalyzes the reversible hydration of cis-homoaconitate to (2R,3S)-homoisocitrate, a step in the alpha-aminoadipate pathway for lysine biosynthesis. The polypeptide is Homoaconitase, mitochondrial (LYS4) (Mycosarcoma maydis (Corn smut fungus)).